Here is a 248-residue protein sequence, read N- to C-terminus: Probable transcriptional regulatory protein Nwi_2729 (248 aa).

The segment at 1–21 is disordered; the sequence is MAGHSQFKNIMHRKGRQDAQK.

Belongs to the TACO1 family.

It localises to the cytoplasm. The polypeptide is Probable transcriptional regulatory protein Nwi_2729 (Nitrobacter winogradskyi (strain ATCC 25391 / DSM 10237 / CIP 104748 / NCIMB 11846 / Nb-255)).